The primary structure comprises 292 residues: Elongation factor Ts (292 aa).

Positions 82–85 are involved in Mg(2+) ion dislocation from EF-Tu; it reads TDFV.

Belongs to the EF-Ts family.

Its subcellular location is the cytoplasm. Its function is as follows. Associates with the EF-Tu.GDP complex and induces the exchange of GDP to GTP. It remains bound to the aminoacyl-tRNA.EF-Tu.GTP complex up to the GTP hydrolysis stage on the ribosome. The chain is Elongation factor Ts from Legionella pneumophila subsp. pneumophila (strain Philadelphia 1 / ATCC 33152 / DSM 7513).